Reading from the N-terminus, the 218-residue chain is Small ribosomal subunit protein uS3c (218 aa).

The 72-residue stretch at 47–118 (VQKNMKTSSG…KLNIAITRIE (72 aa)) folds into the KH type-2 domain.

This sequence belongs to the universal ribosomal protein uS3 family. Part of the 30S ribosomal subunit.

Its subcellular location is the plastid. It is found in the chloroplast. This is Small ribosomal subunit protein uS3c (rps3) from Helianthus annuus (Common sunflower).